Consider the following 113-residue polypeptide: MAPKMKAAMKAMKAPAMKGKAMTKTGLAEAWRRRPSFLRRTAGQSWRAWPRSCAAEVKKTGKLTIPGLVMVKTRKKPATKAGKREMFGKVVLVKASCQDVVKAYPVKALKTDF.

Positions methionine 1 to lysine 20 are disordered.

The protein resides in the nucleus. The polypeptide is Major basic nuclear protein 1 (HCc1) (Crypthecodinium cohnii (Dinoflagellate)).